We begin with the raw amino-acid sequence, 292 residues long: WRKY transcription factor 55 (292 aa).

Residues 133 to 155 form a disordered region; sequence VERSGASGSSTPRQRRRKDEGEE. Residues 167-235 constitute a DNA-binding region (WRKY); the sequence is NTDLPPDDNH…YRGSHTCYNS (69 aa).

Belongs to the WRKY group III family.

It is found in the nucleus. In terms of biological role, transcription factor. Interacts specifically with the W box (5'-(T)TGAC[CT]-3'), a frequently occurring elicitor-responsive cis-acting element. The protein is WRKY transcription factor 55 (WRKY55) of Arabidopsis thaliana (Mouse-ear cress).